A 179-amino-acid polypeptide reads, in one-letter code: dCTP deaminase (179 aa).

DCTP contacts are provided by residues 101–106 and Asp-117; that span reads RSTLAR. The active-site Proton donor/acceptor is Glu-127. Gln-165 provides a ligand contact to dCTP.

The protein belongs to the dCTP deaminase family. Homotrimer.

The enzyme catalyses dCTP + H2O + H(+) = dUTP + NH4(+). It participates in pyrimidine metabolism; dUMP biosynthesis; dUMP from dCTP (dUTP route): step 1/2. Functionally, catalyzes the deamination of dCTP to dUTP. In Caldivirga maquilingensis (strain ATCC 700844 / DSM 13496 / JCM 10307 / IC-167), this protein is dCTP deaminase.